Here is a 325-residue protein sequence, read N- to C-terminus: GMP reductase (325 aa).

The Thioimidate intermediate role is filled by Cys173. Residue 202 to 225 coordinates NADP(+); sequence IIADGGIRSHGDIAKSVRFGATMV.

This sequence belongs to the IMPDH/GMPR family. GuaC type 2 subfamily.

It carries out the reaction IMP + NH4(+) + NADP(+) = GMP + NADPH + 2 H(+). Functionally, catalyzes the irreversible NADPH-dependent deamination of GMP to IMP. It functions in the conversion of nucleobase, nucleoside and nucleotide derivatives of G to A nucleotides, and in maintaining the intracellular balance of A and G nucleotides. The chain is GMP reductase from Acidovorax sp. (strain JS42).